A 411-amino-acid polypeptide reads, in one-letter code: SH3 and cysteine-rich domain-containing protein 2 (411 aa).

Residues 1–29 (MTEMSEKENEPDDAATHSPPGTVSALQET) form a disordered region. Residues 19 to 29 (PPGTVSALQET) are compositionally biased toward polar residues. Ser48 carries the phosphoserine modification. The interval 64–95 (TEVLLTPPTPLPPPSPPPTASDRGLATPSPSP) is disordered. The segment covering 70-82 (PPTPLPPPSPPPT) has biased composition (pro residues). The Phorbol-ester/DAG-type zinc-finger motif lies at 110–161 (LHSFQEHVFKRASPCELCHQLIVGNSKQGLRCKMCKVSVHLWCSEEISHQQC). Disordered regions lie at residues 174–203 (SSPLLVHEPPPVCATSKESPPTGDSGKVDP) and 219–288 (RSSF…ATLR). The segment covering 219–232 (RSSFSSTSESPTRS) has biased composition (low complexity). SH3 domains follow at residues 292 to 351 (GPMY…RVRP) and 354 to 411 (NVWR…LTEI).

In terms of assembly, interacts (via SH3 domains) with CACNA1S. Interacts (via SH3 domains) with CACNA1C. Has much lower affinity for CACNA1C than for CACNA1S.

The protein localises to the cytoplasm. The protein resides in the cytosol. It localises to the cell membrane. Its subcellular location is the sarcolemma. Plays a redundant role in promoting the expression of calcium channel CACNA1S at the cell membrane, and thereby contributes to increased channel activity. Slows down the inactivation rate of the calcium channel CACNA1C. The polypeptide is SH3 and cysteine-rich domain-containing protein 2 (STAC2) (Homo sapiens (Human)).